We begin with the raw amino-acid sequence, 235 residues long: Phosphoribosylaminoimidazole-succinocarboxamide synthase (235 aa).

It belongs to the SAICAR synthetase family.

The enzyme catalyses 5-amino-1-(5-phospho-D-ribosyl)imidazole-4-carboxylate + L-aspartate + ATP = (2S)-2-[5-amino-1-(5-phospho-beta-D-ribosyl)imidazole-4-carboxamido]succinate + ADP + phosphate + 2 H(+). It functions in the pathway purine metabolism; IMP biosynthesis via de novo pathway; 5-amino-1-(5-phospho-D-ribosyl)imidazole-4-carboxamide from 5-amino-1-(5-phospho-D-ribosyl)imidazole-4-carboxylate: step 1/2. This Lachnoclostridium phytofermentans (strain ATCC 700394 / DSM 18823 / ISDg) (Clostridium phytofermentans) protein is Phosphoribosylaminoimidazole-succinocarboxamide synthase.